The chain runs to 329 residues: Protein phosphatase 1 regulatory subunit 42 (329 aa).

7 LRR repeats span residues 30–51 (KLTHLNFSDKNIEEIDDLSVCR), 52–73 (NLTVLYLYDNQISQICNLGFAS), 74–95 (NLTHLYMQNNNISCIENLSSLH), 96–117 (KLSKLFLGGNSITVVEGLEELK), 118–139 (SLKELHVEGQKLPCGEKLAFDP), 148–169 (TLCILNISKNNIDELWDLAPLR), and 170–191 (KMTHLFAADNQLHDIQELETVF). The 39-residue stretch at 205 to 243 (NPVCHKPKYRDRLITVCKFLDDLDGKQINELSRQFLINW) folds into the LRRCT domain. A disordered region spans residues 268 to 329 (STSADFHLGP…SSTEWQSLKI (62 aa)). The segment covering 318 to 329 (GDSSTEWQSLKI) has biased composition (polar residues).

It is found in the cytoplasm. The protein localises to the cytoskeleton. Its subcellular location is the microtubule organizing center. It localises to the centrosome. Its function is as follows. May regulate phosphatase activity of protein phosphatase 1 (PP1) complexes. The protein is Protein phosphatase 1 regulatory subunit 42 (ppp1r42) of Danio rerio (Zebrafish).